The chain runs to 327 residues: Phenylalanine--tRNA ligase alpha subunit (327 aa).

Glu252 lines the Mg(2+) pocket.

The protein belongs to the class-II aminoacyl-tRNA synthetase family. Phe-tRNA synthetase alpha subunit type 1 subfamily. Tetramer of two alpha and two beta subunits. The cofactor is Mg(2+).

Its subcellular location is the cytoplasm. The enzyme catalyses tRNA(Phe) + L-phenylalanine + ATP = L-phenylalanyl-tRNA(Phe) + AMP + diphosphate + H(+). The chain is Phenylalanine--tRNA ligase alpha subunit from Aeromonas salmonicida (strain A449).